The following is a 689-amino-acid chain: MAIDRRREAAGSGAGRQPAPAEENGSLPPGDAAASAPLGGRAGSGGSAEIQPLPALHPSGGPHSSCCAAAAAPSLLLLDYDGSVLPFLGGLGGGYQKTLVVLTWIPALFIGFSQFSDSFLLDQPNFWCHGAGKGTELAGATVTGRWGDMGNWTSPSATPFSTASWGTTSNRSNSSDTPPLPSPPGKGNNDSNCECHAWDYGIRTGLVQNVVSKWDLVCDNAWKVHVAKFSLLVGLIFGYLITGCIADWVGRRPVLLFSVIFILIFGLTVALSVNVTMFSTLRFFEGFCLAGIILTLYALRIELCPPGKRFIITMVASFVAMAGQFLMPGLAALCRDWQVLQALIICPFLLMLLYWSIFPESLRWLMATQQFESAKKLILYLTQKNCVSPESDIKGVMPELEKELSRRPKKVCIVKVVGTRNLWKNIVVLCVNSLTGYGIHHCFARSMMGHEVKVPLLENFYADYYTMASIALASCLAMCLVVRFLGRRGGLLLFMILTALASLLQLGLLNLIGKYSQHPDSELQLKLAVGMSDSVKDKFSIAFSIVGMFASHAVGSLSVFFCAEITPTVIRCGGLGLVLASAGFGMLTAPIIELHNQKGYFLHHIIFACCTLICIICILLLPESRDQNLPENIANGEHYTRQPLLSHKKGEQPLLLTNAELKDYSGLHDVAAVGDGLSEGATANGMKTM.

2 disordered regions span residues 1 to 55 and 162 to 188; these read MAID…PLPA and TASW…GKGN. A glycan (N-linked (GlcNAc...) asparagine) is linked at asparagine 24. Over residues 165–177 the composition is skewed to polar residues; the sequence is WGTTSNRSNSSDT. 2 helical membrane passes run 229-249 and 253-273; these read FSLL…ADWV and PVLL…ALSV. N-linked (GlcNAc...) asparagine glycosylation occurs at asparagine 274. 8 helical membrane-spanning segments follow: residues 283–303, 310–330, 339–359, 462–482, 489–509, 541–561, 572–592, and 601–621; these read FFEG…RIEL, FIIT…MPGL, VLQA…SIFP, ADYY…CLVV, GGLL…LGLL, IAFS…SVFF, CGGL…APII, and FLHH…ILLL.

It belongs to the major facilitator (TC 2.A.1) superfamily. Organic cation transporter (TC 2.A.1.19) family. In terms of tissue distribution, expressed in many tissues, including brain, spinal cord, kidney, liver, eye, adipose tissue, lung, epididymis, adrenal gland, pineal gland, skeletal muscle, heart, spleen, thymus, ovary, uterus, testis and epididymis.

Its subcellular location is the membrane. In Rattus norvegicus (Rat), this protein is Solute carrier family 22 member 23 (Slc22a23).